A 650-amino-acid polypeptide reads, in one-letter code: Chaperone protein DnaK (650 aa).

The residue at position 200 (Thr-200) is a Phosphothreonine; by autocatalysis. Residues 613–634 (QAGAAGAAGAAAAEGAAQGGAQ) are compositionally biased toward low complexity. Positions 613–637 (QAGAAGAAGAAAAEGAAQGGAQTAD) are disordered.

This sequence belongs to the heat shock protein 70 family.

Acts as a chaperone. This Burkholderia thailandensis (strain ATCC 700388 / DSM 13276 / CCUG 48851 / CIP 106301 / E264) protein is Chaperone protein DnaK.